We begin with the raw amino-acid sequence, 439 residues long: tRNA-2-methylthio-N(6)-dimethylallyladenosine synthase (439 aa).

The 118-residue stretch at 2–119 (KKLYLKTHGC…LPDLLDSVIQ (118 aa)) folds into the MTTase N-terminal domain. Residues Cys11, Cys48, Cys82, Cys156, Cys160, and Cys163 each coordinate [4Fe-4S] cluster. The 233-residue stretch at 142–374 (RAEGPSAFVS…QNRINVKAAE (233 aa)) folds into the Radical SAM core domain. The region spanning 377–439 (QSMVGTQQRI…RPYSLWGEIC (63 aa)) is the TRAM domain.

The protein belongs to the methylthiotransferase family. MiaB subfamily. Monomer. It depends on [4Fe-4S] cluster as a cofactor.

It localises to the cytoplasm. The enzyme catalyses N(6)-dimethylallyladenosine(37) in tRNA + (sulfur carrier)-SH + AH2 + 2 S-adenosyl-L-methionine = 2-methylsulfanyl-N(6)-dimethylallyladenosine(37) in tRNA + (sulfur carrier)-H + 5'-deoxyadenosine + L-methionine + A + S-adenosyl-L-homocysteine + 2 H(+). Functionally, catalyzes the methylthiolation of N6-(dimethylallyl)adenosine (i(6)A), leading to the formation of 2-methylthio-N6-(dimethylallyl)adenosine (ms(2)i(6)A) at position 37 in tRNAs that read codons beginning with uridine. This Coxiella burnetii (strain Dugway 5J108-111) protein is tRNA-2-methylthio-N(6)-dimethylallyladenosine synthase.